Here is a 348-residue protein sequence, read N- to C-terminus: MSPYITASLLFGLLLGPTITATSSHWLIAWMGLEINTLAIIPLMAQHHHPRAVEATTKYFLTQATAAAMLLFASTTNAWLTGQWELQQMTHPLPSTLIILALALKIGLAPLHTWLPEVLQGLDLTTGLILSTWQKLAPFALLLQLQPNNPTLLVILGVLSTLIGGWGGLNQTQLRKILAYSSIAHLGWMILILQFSPTLTLLTLMLYLIMTSSAFLTFILNKTTTINALATSWAKTPILTSLLPLVLLSLGGLPPLTGFMPKWLILQELTKHDLAPTATLAALSALLSLYFYLRLSYAMTLTIAPNNLTGTLPWRTQTTQPNMMTATMAASSILLLPMTPGILTLFNI.

Helical transmembrane passes span 1–21 (MSPY…TITA), 60–80 (FLTQ…NAWL), 96–116 (TLII…TWLP), 149–169 (NPTL…WGGL), 177–194 (ILAY…LILQ), 198–220 (TLTL…TFIL), 238–258 (ILTS…PLTG), 273–293 (DLAP…YFYL), and 328–348 (MAAS…LFNI).

It belongs to the complex I subunit 2 family.

Its subcellular location is the mitochondrion inner membrane. The catalysed reaction is a ubiquinone + NADH + 5 H(+)(in) = a ubiquinol + NAD(+) + 4 H(+)(out). Its function is as follows. Core subunit of the mitochondrial membrane respiratory chain NADH dehydrogenase (Complex I) that is believed to belong to the minimal assembly required for catalysis. Complex I functions in the transfer of electrons from NADH to the respiratory chain. The immediate electron acceptor for the enzyme is believed to be ubiquinone. The sequence is that of NADH-ubiquinone oxidoreductase chain 2 (MT-ND2) from Tetraodon nigroviridis (Spotted green pufferfish).